The chain runs to 776 residues: Endonuclease MutS2 (776 aa).

Residue 330–337 (GPNTGGKT) coordinates ATP. The 76-residue stretch at 701–776 (LDLRGMRYEE…GSGATIAILK (76 aa)) folds into the Smr domain.

Belongs to the DNA mismatch repair MutS family. MutS2 subfamily. In terms of assembly, homodimer. Binds to stalled ribosomes, contacting rRNA.

Functionally, endonuclease that is involved in the suppression of homologous recombination and thus may have a key role in the control of bacterial genetic diversity. Acts as a ribosome collision sensor, splitting the ribosome into its 2 subunits. Detects stalled/collided 70S ribosomes which it binds and splits by an ATP-hydrolysis driven conformational change. Acts upstream of the ribosome quality control system (RQC), a ribosome-associated complex that mediates the extraction of incompletely synthesized nascent chains from stalled ribosomes and their subsequent degradation. Probably generates substrates for RQC. The protein is Endonuclease MutS2 of Lactococcus lactis subsp. cremoris (strain MG1363).